A 193-amino-acid polypeptide reads, in one-letter code: Endoribonuclease YbeY (193 aa).

Positions 109, 113, and 119 each coordinate Zn(2+). Residues 143 to 193 (GAALREGRREGRAGEAKDRWTRSPTSISTPSRSGSTARGSRAKTSRAGSRT) form a disordered region. The segment covering 147–163 (REGRREGRAGEAKDRWT) has biased composition (basic and acidic residues). Residues 164 to 181 (RSPTSISTPSRSGSTARG) are compositionally biased toward low complexity.

This sequence belongs to the endoribonuclease YbeY family. The cofactor is Zn(2+).

It localises to the cytoplasm. In terms of biological role, single strand-specific metallo-endoribonuclease involved in late-stage 70S ribosome quality control and in maturation of the 3' terminus of the 16S rRNA. This Anaeromyxobacter dehalogenans (strain 2CP-C) protein is Endoribonuclease YbeY.